We begin with the raw amino-acid sequence, 268 residues long: Indole-3-glycerol phosphate synthase (268 aa).

Belongs to the TrpC family.

It catalyses the reaction 1-(2-carboxyphenylamino)-1-deoxy-D-ribulose 5-phosphate + H(+) = (1S,2R)-1-C-(indol-3-yl)glycerol 3-phosphate + CO2 + H2O. It participates in amino-acid biosynthesis; L-tryptophan biosynthesis; L-tryptophan from chorismate: step 4/5. In Micrococcus luteus (strain ATCC 4698 / DSM 20030 / JCM 1464 / CCM 169 / CCUG 5858 / IAM 1056 / NBRC 3333 / NCIMB 9278 / NCTC 2665 / VKM Ac-2230) (Micrococcus lysodeikticus), this protein is Indole-3-glycerol phosphate synthase.